The following is a 135-amino-acid chain: Large ribosomal subunit protein uL16c (135 aa).

This sequence belongs to the universal ribosomal protein uL16 family. In terms of assembly, part of the 50S ribosomal subunit.

Its subcellular location is the plastid. The protein resides in the chloroplast. The polypeptide is Large ribosomal subunit protein uL16c (Cucumis sativus (Cucumber)).